Here is a 188-residue protein sequence, read N- to C-terminus: dCTP deaminase (188 aa).

DCTP contacts are provided by residues 111-116 (KSTYAR), 135-137 (VLE), glutamine 156, tyrosine 170, and glutamine 180. Residue glutamate 137 is the Proton donor/acceptor of the active site.

Belongs to the dCTP deaminase family. As to quaternary structure, homotrimer.

It carries out the reaction dCTP + H2O + H(+) = dUTP + NH4(+). It functions in the pathway pyrimidine metabolism; dUMP biosynthesis; dUMP from dCTP (dUTP route): step 1/2. Its function is as follows. Catalyzes the deamination of dCTP to dUTP. The polypeptide is dCTP deaminase (Protochlamydia amoebophila (strain UWE25)).